The primary structure comprises 349 residues: 1-acylglycerol-3-phosphate O-acyltransferase ABHD5 (349 aa).

Ala2 carries the post-translational modification N-acetylalanine. The AB hydrolase-1 domain occupies Pro77–Arg184. Ser122 carries the post-translational modification Phosphoserine. Positions His327–Asp332 match the HXXXXD motif motif.

Belongs to the peptidase S33 family. ABHD4/ABHD5 subfamily. In terms of assembly, interacts with ADRP, PLIN and PNPLA2. Interacts with PLIN5; promotes interaction with PNPLA2. As to expression, widely expressed in various tissues, including lymphocytes, liver, skeletal muscle and brain. Expressed by upper epidermal layers and dermal fibroblasts in skin, hepatocytes and neurons (at protein level).

Its subcellular location is the cytoplasm. It is found in the lipid droplet. The protein resides in the cytosol. The catalysed reaction is a 1-acyl-sn-glycero-3-phosphate + an acyl-CoA = a 1,2-diacyl-sn-glycero-3-phosphate + CoA. It catalyses the reaction 1-(9Z-octadecenoyl)-sn-glycero-3-phosphate + hexadecanoyl-CoA = 1-(9Z)-octadecenoyl-2-hexadecanoyl-sn-glycero-3-phosphate + CoA. The enzyme catalyses 1-(9Z-octadecenoyl)-sn-glycero-3-phosphate + octadecanoyl-CoA = 1-(9Z-octadecenoyl)-2-octadecanoyl-sn-glycero-3-phosphate + CoA. It carries out the reaction 1-(9Z-octadecenoyl)-sn-glycero-3-phosphate + (9Z)-octadecenoyl-CoA = 1,2-di-(9Z-octadecenoyl)-sn-glycero-3-phosphate + CoA. The catalysed reaction is 1-(9Z-octadecenoyl)-sn-glycero-3-phosphate + (5Z,8Z,11Z,14Z)-eicosatetraenoyl-CoA = 1-(9Z)-octadecenoyl-2-(5Z,8Z,11Z,14Z)-eicosatetraenoyl-sn-glycero-3-phosphate + CoA. It catalyses the reaction eicosanoyl-CoA + 1-(9Z-octadecenoyl)-sn-glycero-3-phosphate = 1-(9Z)-octadecenoyl-2-eicosanoyl-sn-glycero-3-phosphate + CoA. The enzyme catalyses 1-hexadecanoyl-sn-glycero-3-phosphate + (9Z)-octadecenoyl-CoA = 1-hexadecanoyl-2-(9Z-octadecenoyl)-sn-glycero-3-phosphate + CoA. It carries out the reaction 1-octadecanoyl-sn-glycero-3-phosphate + (9Z)-octadecenoyl-CoA = 1-octadecanoyl-2-(9Z-octadecenoyl)-sn-glycero-3-phosphate + CoA. The catalysed reaction is 1-(5Z,8Z,11Z,14Z-eicosatetraenoyl)-sn-glycero-3-phosphate + (9Z)-octadecenoyl-CoA = 1-(5Z,8Z,11Z,14Z)-eicosatetraenoyl-2-(9Z)-octadecenoyl-sn-glycero-3-phosphate + CoA. With respect to regulation, acyltransferase activity is inhibited by detergents such as Triton X-100 and 3-[(3-cholamidopropyl)dimethylammonio]-1-propanesulfonate (CHAPS). Acyltransferase activity is inhibited by the presence of magnesium and calcium. Its function is as follows. Coenzyme A-dependent lysophosphatidic acid acyltransferase that catalyzes the transfer of an acyl group on a lysophosphatidic acid. Functions preferentially with 1-oleoyl-lysophosphatidic acid followed by 1-palmitoyl-lysophosphatidic acid, 1-stearoyl-lysophosphatidic acid and 1-arachidonoyl-lysophosphatidic acid as lipid acceptor. Functions preferentially with arachidonoyl-CoA followed by oleoyl-CoA as acyl group donors. Functions in phosphatidic acid biosynthesis. May regulate the cellular storage of triacylglycerol through activation of the phospholipase PNPLA2. Involved in keratinocyte differentiation. Regulates lipid droplet fusion. The protein is 1-acylglycerol-3-phosphate O-acyltransferase ABHD5 of Homo sapiens (Human).